Here is a 215-residue protein sequence, read N- to C-terminus: Chaperone protein TorD (215 aa).

The protein belongs to the TorD/DmsD family. TorD subfamily.

It localises to the cytoplasm. Functionally, involved in the biogenesis of TorA. Acts on TorA before the insertion of the molybdenum cofactor and, as a result, probably favors a conformation of the apoenzyme that is competent for acquiring the cofactor. This is Chaperone protein TorD from Vibrio vulnificus (strain CMCP6).